Reading from the N-terminus, the 55-residue chain is ATP synthase F(0) complex subunit 8 (55 aa).

Residues 9–29 (WFAIMVFSWFVFLIFLPPKIM) traverse the membrane as a helical segment.

Belongs to the ATPase protein 8 family. As to quaternary structure, component of the ATP synthase complex composed at least of ATP5F1A/subunit alpha, ATP5F1B/subunit beta, ATP5MC1/subunit c (homooctomer), MT-ATP6/subunit a, MT-ATP8/subunit 8, ATP5ME/subunit e, ATP5MF/subunit f, ATP5MG/subunit g, ATP5MK/subunit k, ATP5MJ/subunit j, ATP5F1C/subunit gamma, ATP5F1D/subunit delta, ATP5F1E/subunit epsilon, ATP5PF/subunit F6, ATP5PB/subunit b, ATP5PD/subunit d, ATP5PO/subunit OSCP. ATP synthase complex consists of a soluble F(1) head domain (subunits alpha(3) and beta(3)) - the catalytic core - and a membrane F(0) domain - the membrane proton channel (subunits c, a, 8, e, f, g, k and j). These two domains are linked by a central stalk (subunits gamma, delta, and epsilon) rotating inside the F1 region and a stationary peripheral stalk (subunits F6, b, d, and OSCP).

The protein localises to the mitochondrion membrane. In terms of biological role, subunit 8, of the mitochondrial membrane ATP synthase complex (F(1)F(0) ATP synthase or Complex V) that produces ATP from ADP in the presence of a proton gradient across the membrane which is generated by electron transport complexes of the respiratory chain. ATP synthase complex consist of a soluble F(1) head domain - the catalytic core - and a membrane F(1) domain - the membrane proton channel. These two domains are linked by a central stalk rotating inside the F(1) region and a stationary peripheral stalk. During catalysis, ATP synthesis in the catalytic domain of F(1) is coupled via a rotary mechanism of the central stalk subunits to proton translocation. In vivo, can only synthesize ATP although its ATP hydrolase activity can be activated artificially in vitro. Part of the complex F(0) domain. This is ATP synthase F(0) complex subunit 8 from Tetraodon nigroviridis (Spotted green pufferfish).